The primary structure comprises 207 residues: Octanoyltransferase (207 aa).

Residues 27–203 (ASTEDELWVV…HLETQFTPKA (177 aa)) enclose the BPL/LPL catalytic domain. Substrate is bound by residues 66 to 73 (RGGQITYH), 133 to 135 (SLG), and 146 to 148 (GLA). The active-site Acyl-thioester intermediate is Cys-164.

This sequence belongs to the LipB family.

The protein localises to the cytoplasm. The catalysed reaction is octanoyl-[ACP] + L-lysyl-[protein] = N(6)-octanoyl-L-lysyl-[protein] + holo-[ACP] + H(+). It participates in protein modification; protein lipoylation via endogenous pathway; protein N(6)-(lipoyl)lysine from octanoyl-[acyl-carrier-protein]: step 1/2. Functionally, catalyzes the transfer of endogenously produced octanoic acid from octanoyl-acyl-carrier-protein onto the lipoyl domains of lipoate-dependent enzymes. Lipoyl-ACP can also act as a substrate although octanoyl-ACP is likely to be the physiological substrate. In Neisseria meningitidis serogroup C / serotype 2a (strain ATCC 700532 / DSM 15464 / FAM18), this protein is Octanoyltransferase.